A 1099-amino-acid polypeptide reads, in one-letter code: MTAASTSKWGLVTNVVNSIVGVSVLTMPFCFKQCGIVLGALLLVFCSWMTHQSCMFLVKSASLSKRRTYAGLAFHAYGKAGKMLVETSMIGLMLGSCITFYVVIGDLGSNFFAPLLGLQVTRTFRVFLLFAVSLCIVLPLSLQRNMMASIQSFSAMALLFYTVFMFVIVLSSFKHGLFSGQWLQRVSYIRWEGVFRCVPIFGMSFACQSQVLPTYDSLDEPSVKTMSSIFASSLNVVTAFYVMVGFFGYVSFTDATTGNVLIHFPSNLVTEMIRVGFVMSVAVGFPMMILPCRQALNTLLFEQQQKDGTFAAGGYMPPLRFKVLTLSVVFGTMVGGVMIPNVETILGFTGATMGSLICFICPALIYKKAHKNAPSAQVVLWVGLGILVVSTLTTLSVSEEAPLDLTQGARSGQRGDAEGAMKVEAARLSVQDPVVVMAEDSQEKLKPAEDKEVLEQAQIKGPVDVPGGDTPKEKQEAAQLDRPGQGIAVPMGEAHRHEPPIPHDKVVVDEGQDQEGPEEKKPPPKLPDEGDPAGRGQGAPLLPESEKKQDPERGEEGKRPEQVLAVGEIERPQKIPEANGQPPVQPRKEDSRPGNRDLHPVPQARVSVELNDLVAGEGKESAQKAGGAPWKPMESAVESNIGGKAGLAVQRPEAAEQREKNEAEQPGGDQAGSKLEEAGRAEMLDHAVLLQVIKEQQVQQKRLLDQQEKLLAVIEEQHKEIRQQRQEGEEDKPKPADMQPEPGAAVLRGQEEEAEHAGAPDEHAGETLEDNPSQPLQPVLGAPRGHPAPSQDKGQHPLEEVKVLAGRDLADLPAGGSDTEPHGASSKLREDQKGAALKVAEAVRKLVPGDLEPVHKPDPAEVPKSPEKQLAKEVARQRQDVFGEGSQERKETGKDAVAPGADTQKEAAQPLVGAEAEDSHSKSRHSEPTKVPASGPAGMGFQAQARFRQEPQVIFDKSQDSHPEVRSEGPRGVGIPAEEQHRGRGAAAMQEEKQRPDPNSGPKLAVPGDQKPENAKPNRDLKVQAGSDLRRRRRDLASPPEQELAPKDGVIISFNSLPNVQVNDLRSALDTQLRQAAGAALQVVHSRQIKQLSGDLEEA.

10 helical membrane-spanning segments follow: residues 9-31, 36-58, 84-104, 123-143, 153-173, 229-249, 272-292, 323-343, 345-365, and 378-398; these read WGLV…PFCF, IVLG…MFLV, LVET…YVVI, TFRV…LSLQ, FSAM…LSSF, IFAS…FFGY, MIRV…ILPC, VLTL…PNVE, ILGF…PALI, and VVLW…LSVS. Disordered stretches follow at residues 440-679 and 720-1047; these read DSQE…EEAG and EIRQ…LAPK. S441 is modified (phosphoserine). 5 stretches are compositionally biased toward basic and acidic residues: residues 441-454, 493-508, 517-528, 544-561, and 586-599; these read SQEK…KEVL, EAHR…KVVV, PEEKKPPPKLPD, ESEK…KRPE, and PRKE…RDLH. S607 and S635 each carry phosphoserine. Basic and acidic residues-rich tracts occupy residues 653–663, 720–735, and 749–766; these read EAAEQREKNEA, EIRQ…KPKP, and GQEE…HAGE. A coiled-coil region spans residues 698-734; sequence VQQKRLLDQQEKLLAVIEEQHKEIRQQRQEGEEDKPK. T767 is subject to Phosphothreonine. Composition is skewed to basic and acidic residues over residues 793–802, 852–894, 917–928, 957–969, and 1010–1022; these read KGQHPLEEVK, EPVH…ETGK, EDSHSKSRHSEP, KSQD…RSEG, and QKPE…RDLK. Phosphoserine is present on S886.

It belongs to the amino acid/polyamine transporter 2 family. Only expressed in the pituitary, adrenal gland, stomach and in the upper gastrointestinal tract.

Its subcellular location is the membrane. The catalysed reaction is L-glutamate(out) = L-glutamate(in). It carries out the reaction L-glutamine(out) = L-glutamine(in). It catalyses the reaction L-alanine(in) = L-alanine(out). The enzyme catalyses L-serine(in) = L-serine(out). The catalysed reaction is L-leucine(in) = L-leucine(out). Functionally, facilitates bidirectional transport of amino acids. May act as a glutamate sensor that regulates glutamate-glutamine cycle and mTOR signaling in the brain. The transport mechanism remains to be elucidated. This is Solute carrier family 38 member 10 from Rattus norvegicus (Rat).